The primary structure comprises 154 residues: GTP-dependent dephospho-CoA kinase (154 aa).

GTP is bound by residues D34, D53, and E107.

This sequence belongs to the GTP-dependent DPCK family.

The catalysed reaction is 3'-dephospho-CoA + GTP = GDP + CoA + H(+). Its pathway is cofactor biosynthesis; coenzyme A biosynthesis. In terms of biological role, catalyzes the GTP-dependent phosphorylation of the 3'-hydroxyl group of dephosphocoenzyme A to form coenzyme A (CoA). This Nitrosopumilus maritimus (strain SCM1) protein is GTP-dependent dephospho-CoA kinase.